The chain runs to 645 residues: 1,4-alpha-glucan branching enzyme GlgB (645 aa).

The active-site Nucleophile is the D309. E352 acts as the Proton donor in catalysis. The segment at 621 to 645 (MRKGSKKQDGKKAELRSNATSRRKR) is disordered. Positions 626 to 635 (KKQDGKKAEL) are enriched in basic and acidic residues.

Belongs to the glycosyl hydrolase 13 family. GlgB subfamily. In terms of assembly, monomer.

The catalysed reaction is Transfers a segment of a (1-&gt;4)-alpha-D-glucan chain to a primary hydroxy group in a similar glucan chain.. It functions in the pathway glycan biosynthesis; glycogen biosynthesis. In terms of biological role, catalyzes the formation of the alpha-1,6-glucosidic linkages in glycogen by scission of a 1,4-alpha-linked oligosaccharide from growing alpha-1,4-glucan chains and the subsequent attachment of the oligosaccharide to the alpha-1,6 position. The polypeptide is 1,4-alpha-glucan branching enzyme GlgB (Bacillus cytotoxicus (strain DSM 22905 / CIP 110041 / 391-98 / NVH 391-98)).